Here is a 504-residue protein sequence, read N- to C-terminus: 2-isopropylmalate synthase (504 aa).

One can recognise a Pyruvate carboxyltransferase domain in the interval 6-267 (IIVFDTTLRD…YTDINFKEIY (262 aa)). Mn(2+)-binding residues include aspartate 15, histidine 201, histidine 203, and asparagine 237. The segment at 391–504 (EIIALSSSEC…ALNSYISMKQ (114 aa)) is regulatory domain.

The protein belongs to the alpha-IPM synthase/homocitrate synthase family. LeuA type 1 subfamily. In terms of assembly, homodimer. It depends on Mn(2+) as a cofactor.

The protein localises to the cytoplasm. It catalyses the reaction 3-methyl-2-oxobutanoate + acetyl-CoA + H2O = (2S)-2-isopropylmalate + CoA + H(+). Its pathway is amino-acid biosynthesis; L-leucine biosynthesis; L-leucine from 3-methyl-2-oxobutanoate: step 1/4. Catalyzes the condensation of the acetyl group of acetyl-CoA with 3-methyl-2-oxobutanoate (2-ketoisovalerate) to form 3-carboxy-3-hydroxy-4-methylpentanoate (2-isopropylmalate). The protein is 2-isopropylmalate synthase of Campylobacter hominis (strain ATCC BAA-381 / DSM 21671 / CCUG 45161 / LMG 19568 / NCTC 13146 / CH001A).